The sequence spans 265 residues: tRNA (guanine-N(1)-)-methyltransferase (265 aa).

Residues Gly119 and 139–144 (VGDYIL) contribute to the S-adenosyl-L-methionine site.

The protein belongs to the RNA methyltransferase TrmD family. Homodimer.

Its subcellular location is the cytoplasm. It carries out the reaction guanosine(37) in tRNA + S-adenosyl-L-methionine = N(1)-methylguanosine(37) in tRNA + S-adenosyl-L-homocysteine + H(+). Functionally, specifically methylates guanosine-37 in various tRNAs. The chain is tRNA (guanine-N(1)-)-methyltransferase from Pseudoalteromonas atlantica (strain T6c / ATCC BAA-1087).